The following is a 406-amino-acid chain: Odorant receptor 42a (406 aa).

At 1 to 44 (MDLRRWFPTLYTQSKDSPVRSRDATLYLLRCVFLMGVRKPPAKF) the chain is on the cytoplasmic side. Residues 45–65 (FVAYVLWSFALNFCSTFYQPI) form a helical membrane-spanning segment. The Extracellular segment spans residues 66–86 (GFLTGYISHLSEFSPGEFLTS). A helical transmembrane segment spans residues 87–107 (LQVAFNAWSCSTKVLIVWALV). The Cytoplasmic portion of the chain corresponds to 108–142 (KRFDEANNLLDEMDRRITDPGERLQIHRAVSLSNR). Residues 143–163 (IFFFFMAVYMVYATNTFLSAI) traverse the membrane as a helical segment. Topologically, residues 164–181 (FIGRPPYQNYYPFLDWRS) are extracellular. Residues 182-202 (STLHLALQAGLEYFAMAGACF) traverse the membrane as a helical segment. The Cytoplasmic portion of the chain corresponds to 203–271 (QDVCVDCYPV…DCLRPVISGT (69 aa)). A helical membrane pass occupies residues 272-292 (IFVQFLVVGLVLGFTLINIVL). Residues 293–298 (FANLGS) are Extracellular-facing. Residues 299–319 (AIAALSFMAAVLLETTPFCIL) traverse the membrane as a helical segment. The Cytoplasmic segment spans residues 320–359 (CNYLTEDCYKLADALFQSNWIDEEKRYQKTLMYFLQKLQQ). A helical membrane pass occupies residues 360–380 (PITFMAMNVFPISVGTNISVT). The Extracellular segment spans residues 381–406 (KFSFSVFTLVKQMNISEKLAKSEMEE). N394 carries N-linked (GlcNAc...) asparagine glycosylation.

It belongs to the insect chemoreceptor superfamily. Heteromeric odorant receptor channel (TC 1.A.69) family. Or2a subfamily. Interacts with Orco. Complexes exist early in the endomembrane system in olfactory sensory neurons (OSNs), coupling these complexes to the conserved ciliary trafficking pathway.

The protein resides in the cell membrane. Its function is as follows. Odorant receptor which mediates acceptance or avoidance behavior, depending on its substrates. The odorant receptor repertoire encodes a large collection of odor stimuli that vary widely in identity, intensity, and duration. May form a complex with Orco to form odorant-sensing units, providing sensitive and prolonged odorant signaling and calcium permeability. Involved in the behavioral responses to butanol, ethyl acetate, propyl acetate, and pentyl acetate. Also responds to pyrazines. This chain is Odorant receptor 42a (Or42a), found in Drosophila melanogaster (Fruit fly).